Consider the following 238-residue polypeptide: 2-phytyl-1,4-naphtoquinone methyltransferase (238 aa).

The protein belongs to the class I-like SAM-binding methyltransferase superfamily. MenG/UbiE family.

It carries out the reaction demethylphylloquinol + S-adenosyl-L-methionine = phylloquinol + S-adenosyl-L-homocysteine + H(+). It participates in cofactor biosynthesis; phylloquinone biosynthesis. Its function is as follows. Methyltransferase required for the conversion of 2-phytyl-1,4-beta-naphthoquinol to phylloquinol. This is 2-phytyl-1,4-naphtoquinone methyltransferase from Synechocystis sp. (strain ATCC 27184 / PCC 6803 / Kazusa).